The chain runs to 273 residues: Putative phosphoenolpyruvate synthase regulatory protein (273 aa).

Position 153-160 (153-160 (AVSRAGKT)) interacts with ADP.

It belongs to the pyruvate, phosphate/water dikinase regulatory protein family. PSRP subfamily.

The catalysed reaction is [pyruvate, water dikinase] + ADP = [pyruvate, water dikinase]-phosphate + AMP + H(+). It carries out the reaction [pyruvate, water dikinase]-phosphate + phosphate + H(+) = [pyruvate, water dikinase] + diphosphate. Bifunctional serine/threonine kinase and phosphorylase involved in the regulation of the phosphoenolpyruvate synthase (PEPS) by catalyzing its phosphorylation/dephosphorylation. This chain is Putative phosphoenolpyruvate synthase regulatory protein, found in Xanthomonas campestris pv. campestris (strain ATCC 33913 / DSM 3586 / NCPPB 528 / LMG 568 / P 25).